Reading from the N-terminus, the 465-residue chain is uncharacterized protein (465 aa).

Disordered regions lie at residues 95-173 (STST…RKDP), 407-426 (QEME…KSDK), and 443-465 (ANPI…SSKK). The segment covering 118 to 137 (KTGSKKVTRSKKSKKTKRRS) has biased composition (basic residues). Positions 138 to 150 (STTVTTTTISNSK) are enriched in low complexity. Residues 153–173 (TPDKDKDSKDQRKQRTKRKDP) are compositionally biased toward basic and acidic residues. Positions 451-465 (MARRNRRSKGSSSKK) are enriched in basic residues.

This is an uncharacterized protein from Caenorhabditis elegans.